We begin with the raw amino-acid sequence, 568 residues long: Phosphomethylpyrimidine synthase (568 aa).

Substrate-binding positions include Asn-188, Met-217, Tyr-246, His-282, 302-304, 343-346, and Glu-382; these read SRG and DGLR. His-386 contacts Zn(2+). Substrate is bound at residue Tyr-409. Position 450 (His-450) interacts with Zn(2+). [4Fe-4S] cluster contacts are provided by Cys-530, Cys-533, and Cys-538.

This sequence belongs to the ThiC family. Homodimer. It depends on [4Fe-4S] cluster as a cofactor.

It catalyses the reaction 5-amino-1-(5-phospho-beta-D-ribosyl)imidazole + S-adenosyl-L-methionine = 4-amino-2-methyl-5-(phosphooxymethyl)pyrimidine + CO + 5'-deoxyadenosine + formate + L-methionine + 3 H(+). It functions in the pathway cofactor biosynthesis; thiamine diphosphate biosynthesis. Its function is as follows. Catalyzes the synthesis of the hydroxymethylpyrimidine phosphate (HMP-P) moiety of thiamine from aminoimidazole ribotide (AIR) in a radical S-adenosyl-L-methionine (SAM)-dependent reaction. The polypeptide is Phosphomethylpyrimidine synthase (Idiomarina loihiensis (strain ATCC BAA-735 / DSM 15497 / L2-TR)).